Reading from the N-terminus, the 433-residue chain is Glutamyl-tRNA reductase (433 aa).

Substrate-binding positions include 49–52 (TCNR), Ser109, 114–116 (EGQ), and Gln120. Cys50 acts as the Nucleophile in catalysis. 198–203 (GAGRMS) contacts NADP(+).

The protein belongs to the glutamyl-tRNA reductase family. In terms of assembly, homodimer.

The enzyme catalyses (S)-4-amino-5-oxopentanoate + tRNA(Glu) + NADP(+) = L-glutamyl-tRNA(Glu) + NADPH + H(+). Its pathway is porphyrin-containing compound metabolism; protoporphyrin-IX biosynthesis; 5-aminolevulinate from L-glutamyl-tRNA(Glu): step 1/2. It functions in the pathway porphyrin-containing compound metabolism; chlorophyll biosynthesis. Functionally, catalyzes the NADPH-dependent reduction of glutamyl-tRNA(Glu) to glutamate 1-semialdehyde (GSA). This chain is Glutamyl-tRNA reductase, found in Prochlorococcus marinus subsp. pastoris (strain CCMP1986 / NIES-2087 / MED4).